Reading from the N-terminus, the 73-residue chain is Large ribosomal subunit protein bL28 (73 aa).

It belongs to the bacterial ribosomal protein bL28 family.

The protein is Large ribosomal subunit protein bL28 of Fervidobacterium nodosum (strain ATCC 35602 / DSM 5306 / Rt17-B1).